A 220-amino-acid chain; its full sequence is SAGA-associated factor 11 homolog (220 aa).

Residues 1–38 (MSTGTANSAVSSKSTNSTTSTSKVPVNEKSNNSQNANT) form a disordered region. The SGF11-type zinc-finger motif lies at 126 to 147 (CTCPNCDRPVSAARFAPHLEKC). Composition is skewed to low complexity over residues 160-177 (RRLA…SSSS) and 204-220 (SQNS…GKTF). A disordered region spans residues 160-220 (RRLATKESNS…GSKKNNGKTF (61 aa)).

This sequence belongs to the SGF11 family. Component of some SAGA transcription coactivator-HAT complexes. Within the SAGA complex, participates in a subcomplex of SAGA called the DUB module (deubiquitination module).

It is found in the nucleus. Component of the transcription regulatory histone acetylation (HAT) complex SAGA, a multiprotein complex that activates transcription by remodeling chromatin and mediating histone acetylation and deubiquitination. Within the SAGA complex, participates in a subcomplex that specifically deubiquitinates histone H2B. The SAGA complex is recruited to specific gene promoters by activators, where it is required for transcription. In Musca domestica (House fly), this protein is SAGA-associated factor 11 homolog.